Reading from the N-terminus, the 221-residue chain is Protein myomaker (221 aa).

Residues 1-3 (MGT) are Extracellular-facing. Residues 4-24 (LVAKLLLPTLSSLAFLPTVSI) form a helical membrane-spanning segment. Residues 25-34 (AAKRRFHMEA) are Cytoplasmic-facing. Residues 35 to 55 (MVYLFTLFFVALHHACNGPGL) traverse the membrane as a helical segment. Residues 56-64 (SVLCFMRHD) are Extracellular-facing. Residues 65–85 (ILEYFSVYGTALSMWVSLMAL) form a helical membrane-spanning segment. At 86–92 (ADFDEPK) the chain is on the cytoplasmic side. A helical membrane pass occupies residues 93-110 (RSTFVMFGVLTIAVRIYH). The Extracellular portion of the chain corresponds to 111 to 113 (DRW). The chain crosses the membrane as a helical span at residues 114–134 (GYGVYSGPIGTAILIIAAKWL). Topologically, residues 135-153 (QKMKEKKGLYPDKSVYTQQ) are cytoplasmic. Residues 154 to 174 (IGPGLCFGALALMLRFFFEDW) form a helical membrane-spanning segment. A topological domain (extracellular) is located at residue Asp175. A helical transmembrane segment spans residues 176 to 196 (YTYVHSFYHCALAMSFVLLLP). Residues 197–221 (KVNKKAGSPGTPAKLDCSTLCCACV) are Cytoplasmic-facing. Residues Cys217 and Cys218 are each lipidated (S-palmitoyl cysteine).

The protein belongs to the TMEM8 family. As to quaternary structure, interacts with MYMX. Palmitoylated at the C-terminus; palmitoylation promotes localization to the Golgi apparatus.

It localises to the cell membrane. The protein localises to the golgi apparatus membrane. In terms of biological role, myoblast-specific protein that mediates myoblast fusion, an essential step for the formation of multi-nucleated muscle fibers. Actively participates in the membrane fusion reaction by mediating the mixing of cell membrane lipids (hemifusion) upstream of MYMX. Acts independently of MYMX. Involved in skeletal muscle regeneration in response to injury by mediating the fusion of satellite cells, a population of muscle stem cells, with injured myofibers. Also involved in skeletal muscle hypertrophy, probably by mediating the fusion of satellite cells with myofibers. This is Protein myomaker from Homo sapiens (Human).